The following is a 328-amino-acid chain: Cytochrome c biogenesis protein CcsA (328 aa).

8 helical membrane passes run 13 to 33 (ISFS…LVNL), 46 to 66 (GIVI…IYSG), 73 to 93 (LYES…VSYF), 101 to 121 (LNAI…SGLL), 146 to 166 (MVLG…LLVI), 234 to 254 (IISL…VWAN), 263 to 283 (WDPK…YLHI), and 295 to 315 (AIVA…VNLL).

Belongs to the CcmF/CycK/Ccl1/NrfE/CcsA family. In terms of assembly, may interact with Ccs1.

The protein resides in the plastid. It is found in the chloroplast thylakoid membrane. In terms of biological role, required during biogenesis of c-type cytochromes (cytochrome c6 and cytochrome f) at the step of heme attachment. In Aethionema cordifolium (Lebanon stonecress), this protein is Cytochrome c biogenesis protein CcsA.